The primary structure comprises 322 residues: uncharacterized protein (322 aa).

The next 4 membrane-spanning stretches (helical) occupy residues 24 to 44 (LLHL…IQIT), 68 to 88 (LFFE…LIFI), 100 to 120 (IVTS…TPTF), and 125 to 145 (VQLI…MPSL).

It localises to the cell membrane. This is an uncharacterized protein from Bacillus subtilis (strain 168).